The following is a 122-amino-acid chain: Small ribosomal subunit protein bS6 (122 aa).

The tract at residues 96-122 is disordered; that stretch reads ETAPSPMMKAVQKEDAAKSHRTEAPAA. The segment covering 106–122 has biased composition (basic and acidic residues); that stretch reads VQKEDAAKSHRTEAPAA.

It belongs to the bacterial ribosomal protein bS6 family.

In terms of biological role, binds together with bS18 to 16S ribosomal RNA. This Herminiimonas arsenicoxydans protein is Small ribosomal subunit protein bS6.